A 728-amino-acid polypeptide reads, in one-letter code: Myb-related protein A (728 aa).

The disordered stretch occupies residues Met-1–Lys-31. HTH myb-type domains lie at Lys-30–Leu-80, Ser-81–Val-136, and Lys-137–Val-187. 3 DNA-binding regions (H-T-H motif) span residues Trp-57–Leu-80, Trp-109–Leu-132, and Trp-160–Met-183. Residues Ile-230–Leu-293 are transcriptional activation domain. The segment at Ser-296–Pro-534 is negative regulatory domain.

In terms of assembly, component of the DREAM complex.

The protein localises to the nucleus. Functionally, transcription factor that specifically recognizes the sequence 5'-YAAC[GT]G-3'. Acts as a master regulator of male meiosis by promoting expression of piRNAs. The piRNA metabolic process mediates the repression of transposable elements during meiosis by forming complexes composed of piRNAs and Piwi proteins and governs the methylation and subsequent repression of transposons, which is essential for the germline integrity. The polypeptide is Myb-related protein A (mybl1) (Xenopus laevis (African clawed frog)).